The chain runs to 120 residues: Putative ankyrin repeat protein RBE_1215 (120 aa).

ANK repeat units lie at residues 22–52 (DGGNALHVACGAGGSLKMVKFLVENNILTNI) and 59–88 (FGDTPLTLAISYDHHDIVDYFKQKFNITSV).

The sequence is that of Putative ankyrin repeat protein RBE_1215 from Rickettsia bellii (strain RML369-C).